A 247-amino-acid polypeptide reads, in one-letter code: Adenosylcobinamide-GDP ribazoletransferase (247 aa).

Helical transmembrane passes span 34–54, 59–79, 113–133, 138–158, and 194–214; these read IITF…VFMV, CGVP…TGGF, GGLA…ELTL, ILAS…LLMY, and VLLP…AIFI.

It belongs to the CobS family. Mg(2+) is required as a cofactor.

It localises to the cell inner membrane. It carries out the reaction alpha-ribazole + adenosylcob(III)inamide-GDP = adenosylcob(III)alamin + GMP + H(+). The enzyme catalyses alpha-ribazole 5'-phosphate + adenosylcob(III)inamide-GDP = adenosylcob(III)alamin 5'-phosphate + GMP + H(+). It participates in cofactor biosynthesis; adenosylcobalamin biosynthesis; adenosylcobalamin from cob(II)yrinate a,c-diamide: step 7/7. In terms of biological role, joins adenosylcobinamide-GDP and alpha-ribazole to generate adenosylcobalamin (Ado-cobalamin). Also synthesizes adenosylcobalamin 5'-phosphate from adenosylcobinamide-GDP and alpha-ribazole 5'-phosphate. This is Adenosylcobinamide-GDP ribazoletransferase from Escherichia coli O127:H6 (strain E2348/69 / EPEC).